The chain runs to 71 residues: Small, acid-soluble spore protein I (71 aa).

Belongs to the SspI family.

Its subcellular location is the spore core. The polypeptide is Small, acid-soluble spore protein I (Geobacillus sp. (strain WCH70)).